We begin with the raw amino-acid sequence, 183 residues long: Large ribosomal subunit protein uL5 (183 aa).

Belongs to the universal ribosomal protein uL5 family. As to quaternary structure, part of the 50S ribosomal subunit; part of the 5S rRNA/L5/L18/L25 subcomplex. Contacts the 5S rRNA and the P site tRNA. Forms a bridge to the 30S subunit in the 70S ribosome.

In terms of biological role, this is one of the proteins that bind and probably mediate the attachment of the 5S RNA into the large ribosomal subunit, where it forms part of the central protuberance. In the 70S ribosome it contacts protein S13 of the 30S subunit (bridge B1b), connecting the 2 subunits; this bridge is implicated in subunit movement. Contacts the P site tRNA; the 5S rRNA and some of its associated proteins might help stabilize positioning of ribosome-bound tRNAs. The polypeptide is Large ribosomal subunit protein uL5 (Corynebacterium aurimucosum (strain ATCC 700975 / DSM 44827 / CIP 107346 / CN-1) (Corynebacterium nigricans)).